The chain runs to 1103 residues: Ataxin-2 homolog (1103 aa).

A compositionally biased stretch (basic residues) spans M1–F10. The disordered stretch occupies residues M1–F75. Residues V11–G28 are compositionally biased toward gly residues. Composition is skewed to low complexity over residues N33–N44 and H56–Q73. The Sm domain occupies R84 to V166. A coiled-coil region spans residues E258–E287. Disordered regions lie at residues V305–P474, T516–S557, L615–T763, H901–Q920, and Q930–H1103. The segment covering P312–P356 has biased composition (low complexity). The span at V358–Q371 shows a compositional bias: basic and acidic residues. The stretch at H366–Q403 forms a coiled coil. The span at T372–N463 shows a compositional bias: low complexity. Positions T516–T529 are enriched in polar residues. Low complexity-rich tracts occupy residues T530–P544, P637–T676, and T683–E694. Positions I691–Q730 form a coiled coil. Residues N695–S741 show a composition bias toward basic and acidic residues. Positions S742–T763 are enriched in low complexity. Residues Q930 to Q957 show a composition bias toward low complexity. Residues Q960–R969 show a composition bias toward gly residues. Over residues P974–Q984 the composition is skewed to low complexity. Positions Y1020–P1031 are enriched in pro residues. Residues Q1062 to N1076 are compositionally biased toward low complexity.

The protein belongs to the ataxin-2 family.

This chain is Ataxin-2 homolog (atxn2), found in Dictyostelium discoideum (Social amoeba).